The chain runs to 236 residues: Exotoxin type H (236 aa).

An N-terminal signal peptide occupies residues 1-32 (MRYNCRYSHIDKKIYSMIICLSFLLYSNVVQA).

The protein belongs to the staphylococcal/streptococcal toxin family.

Its subcellular location is the secreted. Functionally, mitogenic for human peripheral blood lymphocytes. This chain is Exotoxin type H (speH), found in Streptococcus pyogenes serotype M1.